A 376-amino-acid polypeptide reads, in one-letter code: Protein RecA (376 aa).

78-85 (GPESSGKT) serves as a coordination point for ATP. Residues 355-376 (PVELVPNVDFDDEADTEADAED) form a disordered region. The span at 363–376 (DFDDEADTEADAED) shows a compositional bias: acidic residues.

It belongs to the RecA family.

It localises to the cytoplasm. Functionally, can catalyze the hydrolysis of ATP in the presence of single-stranded DNA, the ATP-dependent uptake of single-stranded DNA by duplex DNA, and the ATP-dependent hybridization of homologous single-stranded DNAs. It interacts with LexA causing its activation and leading to its autocatalytic cleavage. The chain is Protein RecA from Corynebacterium glutamicum (strain R).